We begin with the raw amino-acid sequence, 357 residues long: Heme A synthase (357 aa).

5 helical membrane passes run 24–44, 110–130, 140–160, 175–195, and 209–229; these read LVRYWLYAVFVVLIAIVMVGG, MLARFVGFLVAVPLAFFWVTG, MLGLLALGGLQGAIGWWMVAS, IHLTTACIIITAVFYIARGLV, and FAGWIVFAVLVQIYLGGLVAG. Histidine 272 provides a ligand contact to heme. Transmembrane regions (helical) follow at residues 274–294, 303–323, and 325–345; these read MFAYTVLVLTVLHSLQVWKQV, TIVLVGLVLIQAVIGIATLLM, and VPLHLGLTHQFFALIVLAFAV. Residue histidine 333 coordinates heme.

This sequence belongs to the COX15/CtaA family. Type 2 subfamily. As to quaternary structure, interacts with CtaB. It depends on heme b as a cofactor.

The protein resides in the cell membrane. The enzyme catalyses Fe(II)-heme o + 2 A + H2O = Fe(II)-heme a + 2 AH2. It functions in the pathway porphyrin-containing compound metabolism; heme A biosynthesis; heme A from heme O: step 1/1. Functionally, catalyzes the conversion of heme O to heme A by two successive hydroxylations of the methyl group at C8. The first hydroxylation forms heme I, the second hydroxylation results in an unstable dihydroxymethyl group, which spontaneously dehydrates, resulting in the formyl group of heme A. The sequence is that of Heme A synthase from Brucella anthropi (strain ATCC 49188 / DSM 6882 / CCUG 24695 / JCM 21032 / LMG 3331 / NBRC 15819 / NCTC 12168 / Alc 37) (Ochrobactrum anthropi).